We begin with the raw amino-acid sequence, 89 residues long: Small ribosomal subunit protein uS15 (89 aa).

This sequence belongs to the universal ribosomal protein uS15 family. Part of the 30S ribosomal subunit. Forms a bridge to the 50S subunit in the 70S ribosome, contacting the 23S rRNA.

Its function is as follows. One of the primary rRNA binding proteins, it binds directly to 16S rRNA where it helps nucleate assembly of the platform of the 30S subunit by binding and bridging several RNA helices of the 16S rRNA. Functionally, forms an intersubunit bridge (bridge B4) with the 23S rRNA of the 50S subunit in the ribosome. The chain is Small ribosomal subunit protein uS15 from Parabacteroides distasonis (strain ATCC 8503 / DSM 20701 / CIP 104284 / JCM 5825 / NCTC 11152).